The following is an 84-amino-acid chain: Small ribosomal subunit protein bS20 (84 aa).

The protein belongs to the bacterial ribosomal protein bS20 family.

In terms of biological role, binds directly to 16S ribosomal RNA. This is Small ribosomal subunit protein bS20 from Levilactobacillus brevis (strain ATCC 367 / BCRC 12310 / CIP 105137 / JCM 1170 / LMG 11437 / NCIMB 947 / NCTC 947) (Lactobacillus brevis).